The sequence spans 93 residues: Pyrimidine/purine nucleoside phosphorylase (93 aa).

This sequence belongs to the nucleoside phosphorylase PpnP family.

The enzyme catalyses a purine D-ribonucleoside + phosphate = a purine nucleobase + alpha-D-ribose 1-phosphate. The catalysed reaction is adenosine + phosphate = alpha-D-ribose 1-phosphate + adenine. It catalyses the reaction cytidine + phosphate = cytosine + alpha-D-ribose 1-phosphate. It carries out the reaction guanosine + phosphate = alpha-D-ribose 1-phosphate + guanine. The enzyme catalyses inosine + phosphate = alpha-D-ribose 1-phosphate + hypoxanthine. The catalysed reaction is thymidine + phosphate = 2-deoxy-alpha-D-ribose 1-phosphate + thymine. It catalyses the reaction uridine + phosphate = alpha-D-ribose 1-phosphate + uracil. It carries out the reaction xanthosine + phosphate = alpha-D-ribose 1-phosphate + xanthine. In terms of biological role, catalyzes the phosphorolysis of diverse nucleosides, yielding D-ribose 1-phosphate and the respective free bases. Can use uridine, adenosine, guanosine, cytidine, thymidine, inosine and xanthosine as substrates. Also catalyzes the reverse reactions. The protein is Pyrimidine/purine nucleoside phosphorylase of Sorangium cellulosum (strain So ce56) (Polyangium cellulosum (strain So ce56)).